We begin with the raw amino-acid sequence, 554 residues long: Phenylalanine--tRNA ligase beta subunit (554 aa).

The 76-residue stretch at 276–351 folds into the B5 domain; sequence LSLKSRMISV…INYGYEKFEG (76 aa). Mg(2+) is bound by residues aspartate 329, aspartate 335, glutamate 338, and glutamate 339.

Belongs to the phenylalanyl-tRNA synthetase beta subunit family. Type 2 subfamily. In terms of assembly, tetramer of two alpha and two beta subunits. Requires Mg(2+) as cofactor.

The protein localises to the cytoplasm. The catalysed reaction is tRNA(Phe) + L-phenylalanine + ATP = L-phenylalanyl-tRNA(Phe) + AMP + diphosphate + H(+). The polypeptide is Phenylalanine--tRNA ligase beta subunit (Methanococcus maripaludis (strain C5 / ATCC BAA-1333)).